The sequence spans 89 residues: Small ribosomal subunit protein uS14A (89 aa).

It belongs to the universal ribosomal protein uS14 family. In terms of assembly, part of the 30S ribosomal subunit. Contacts proteins S3 and S10.

Functionally, binds 16S rRNA, required for the assembly of 30S particles and may also be responsible for determining the conformation of the 16S rRNA at the A site. The protein is Small ribosomal subunit protein uS14A of Listeria innocua serovar 6a (strain ATCC BAA-680 / CLIP 11262).